We begin with the raw amino-acid sequence, 150 residues long: Mediator of RNA polymerase II transcription subunit 22a (150 aa).

Residues 99-127 adopt a coiled-coil conformation; that stretch reads SLNDHVEQRIAEFDQEAEKTNRLLARIAD.

The protein belongs to the Mediator complex subunit 22 family. As to quaternary structure, component of the Mediator complex.

Its subcellular location is the nucleus. Its function is as follows. Component of the Mediator complex, a coactivator involved in the regulated transcription of nearly all RNA polymerase II-dependent genes. Mediator functions as a bridge to convey information from gene-specific regulatory proteins to the basal RNA polymerase II transcription machinery. The Mediator complex, having a compact conformation in its free form, is recruited to promoters by direct interactions with regulatory proteins and serves for the assembly of a functional preinitiation complex with RNA polymerase II and the general transcription factors. The polypeptide is Mediator of RNA polymerase II transcription subunit 22a (MED22A) (Arabidopsis thaliana (Mouse-ear cress)).